A 288-amino-acid polypeptide reads, in one-letter code: 2-hydroxy-6-oxononadienedioate/2-hydroxy-6-oxononatrienedioate hydrolase (288 aa).

The active-site Proton acceptor is His267.

It belongs to the AB hydrolase superfamily. MhpC family. As to quaternary structure, homodimer.

It catalyses the reaction (2Z,4E)-2-hydroxy-6-oxonona-2,4-dienedioate + H2O = (2Z)-2-hydroxypenta-2,4-dienoate + succinate + H(+). It carries out the reaction (2Z,4E,7E)-2-hydroxy-6-oxonona-2,4,7-trienedioate + H2O = (2Z)-2-hydroxypenta-2,4-dienoate + fumarate + H(+). It participates in aromatic compound metabolism; 3-phenylpropanoate degradation. Catalyzes the cleavage of the C5-C6 bond of 2-hydroxy-6-oxononadienedioate and 2-hydroxy-6-oxononatrienedioate, a dienol ring fission product of the bacterial meta-cleavage pathway for degradation of phenylpropionic acid. This Escherichia coli (strain K12 / DH10B) protein is 2-hydroxy-6-oxononadienedioate/2-hydroxy-6-oxononatrienedioate hydrolase.